Reading from the N-terminus, the 217-residue chain is Adenylate kinase (217 aa).

10-15 (GAGKGT) provides a ligand contact to ATP. Residues 30–59 (STGDMLRAQVKAGTALGLEAKKHMDAGGLV) are NMP. AMP-binding positions include Thr-31, Arg-36, 57–59 (GLV), 85–88 (GFPR), and Gln-92. An LID region spans residues 122–159 (GRRAHLASGRTYHVKFNPPKVEGIDDVTGEPLVQRDDD). Residues Arg-123 and 132–133 (TY) contribute to the ATP site. AMP is bound by residues Arg-156 and Arg-167. Residue Gly-203 participates in ATP binding.

Belongs to the adenylate kinase family. Monomer.

It localises to the cytoplasm. It carries out the reaction AMP + ATP = 2 ADP. Its pathway is purine metabolism; AMP biosynthesis via salvage pathway; AMP from ADP: step 1/1. In terms of biological role, catalyzes the reversible transfer of the terminal phosphate group between ATP and AMP. Plays an important role in cellular energy homeostasis and in adenine nucleotide metabolism. In Dechloromonas aromatica (strain RCB), this protein is Adenylate kinase.